The primary structure comprises 410 residues: Trifunctional NAD biosynthesis/regulator protein NadR (410 aa).

An HTH cro/C1-type domain is found at 7–62 (LKTAIKQQGCTLQQVADASGMTKGYLSQLLNAKIKSPSAQKLEALHRFLGLEFPRR). The H-T-H motif DNA-binding region spans 18-37 (LQQVADASGMTKGYLSQLLN). The segment at 63-229 (QKNIGVVFGK…EYIPTEVKPF (167 aa)) is nicotinamide mononucleotide adenylyltransferase. Residues 70–73 (FGKF), His77, Arg104, 144–157 (EEGM…WDVW), 177–179 (TSE), 204–206 (MNI), 259–261 (SAW), and 294–297 (YIDF) contribute to the NAD(+) site. Residues 230 to 410 (FVRTVAILGG…LVKEMMGEQG (181 aa)) form a ribosylnicotinamide kinase region.

It in the central section; belongs to the bacterial NMN adenylyltransferase family. In the C-terminal section; belongs to the bacterial RNK family. Homotetramer.

The protein resides in the cell membrane. It is found in the cytoplasm. It carries out the reaction beta-nicotinamide D-ribonucleotide + ATP + H(+) = diphosphate + NAD(+). It catalyses the reaction beta-nicotinamide D-riboside + ATP = beta-nicotinamide D-ribonucleotide + ADP + H(+). It participates in cofactor biosynthesis; NAD(+) biosynthesis [regulation]. The protein operates within cofactor biosynthesis; NAD(+) biosynthesis; NAD(+) from nicotinamide D-ribonucleotide: step 1/1. With respect to regulation, feed-back regulated by NAD. A high level of NAD causes NadR to lose enzymatic activity and repress several NAD synthetic genes; conversely, a low NAD level activates the assimilatory enzymatic activities and leads to derepression of biosynthetic genes. Functionally, this enzyme has three activities: DNA binding, nicotinamide mononucleotide (NMN) adenylyltransferase and ribosylnicotinamide (RN) kinase. The DNA-binding domain binds to the nadB operator sequence in an NAD- and ATP-dependent manner. As NAD levels increase within the cell, the affinity of NadR for the nadB operator regions of nadA, nadB, and pncB increases, repressing the transcription of these genes. The RN kinase activity catalyzes the phosphorylation of RN to form nicotinamide ribonucleotide. The NMN adenylyltransferase activity catalyzes the transfer of the AMP moiety of ATP to nicotinamide ribonucleotide to form NAD(+). The NMN adenylyltransferase domain also functions as the NAD and ATP sensor. The protein is Trifunctional NAD biosynthesis/regulator protein NadR (nadR) of Salmonella typhimurium (strain LT2 / SGSC1412 / ATCC 700720).